Here is an 88-residue protein sequence, read N- to C-terminus: Large ribosomal subunit protein eL37 (88 aa).

Residues 1–24 (MTKGTTSFGKRHNKSHTQCRRCGR) are disordered. Basic residues predominate over residues 9–24 (GKRHNKSHTQCRRCGR). Zn(2+)-binding residues include Cys-19, Cys-22, Cys-34, and Cys-37. Residues 19 to 37 (CRRCGRKSYHIQKKTCSSC) form a C4-type zinc finger.

It belongs to the eukaryotic ribosomal protein eL37 family. Zn(2+) is required as a cofactor.

Functionally, binds to the 23S rRNA. This Schistosoma mansoni (Blood fluke) protein is Large ribosomal subunit protein eL37 (RPL37).